A 157-amino-acid polypeptide reads, in one-letter code: MTNTETAVFGMGCFWSAEELFRKINGVISTEVGFMGGNIKNPTYGQVCRGRSGHIEVVNIIYNPKILKYDDLLELFWNNHDPTTPNRQGWDVGEQYSSHIFYFTEEQKLLAEKSFEKIQKNSELKIVTAIRKASDFFPAEEYHQKYFMKKNNCILNF.

Residue Cys13 is part of the active site.

This sequence belongs to the MsrA Met sulfoxide reductase family.

It catalyses the reaction L-methionyl-[protein] + [thioredoxin]-disulfide + H2O = L-methionyl-(S)-S-oxide-[protein] + [thioredoxin]-dithiol. The enzyme catalyses [thioredoxin]-disulfide + L-methionine + H2O = L-methionine (S)-S-oxide + [thioredoxin]-dithiol. In terms of biological role, has an important function as a repair enzyme for proteins that have been inactivated by oxidation. Catalyzes the reversible oxidation-reduction of methionine sulfoxide in proteins to methionine. In Methanococcus maripaludis (strain C6 / ATCC BAA-1332), this protein is Peptide methionine sulfoxide reductase MsrA.